We begin with the raw amino-acid sequence, 127 residues long: MKVMTLNFLTCAVKNCKSSNDSFPLHPKEAELAKDDIEINPQLLINVLPRIDWAALRTTSTELGFPTLPEQPPSPEDLQSDEALLKELHELLMETQMMEGKLVCGHCGHEYAVKNGVANFLLPSHLV.

One can recognise a TRM112 domain in the interval 2–123 (KVMTLNFLTC…KNGVANFLLP (122 aa)).

The protein belongs to the TRM112 family. As to quaternary structure, heterodimer of mtq2-rmt-1/trm112, forming the eRF1 methyltransferase. Rmt-1/trm112 is necessary for the solubility and activity of the catalytic subunit mtq2. Interacts with trm11; required for full tRNA methyltransferase activity. Interacts with bud23; required for full rRNA methyltransferase activity.

The protein localises to the cytoplasm. It is found in the nucleus. Its function is as follows. Acts as an activator of both rRNA/tRNA and protein methyltransferases. Together with methyltransferase mtq2, required for the methylation of eRF1 on 'Gln-182'. Together with methyltransferase trm11, required for the formation of 2-methylguanosine at position 10 (m2G10) in tRNA. Together with methyltransferase bud23, required for the formation of a 7-methylguanine in 18S rRNA. Involved in biogenesis of both 40S and 60S ribosomal subunits. The protein is Multifunctional methyltransferase subunit trm112 (rmt-1) of Neurospora crassa (strain ATCC 24698 / 74-OR23-1A / CBS 708.71 / DSM 1257 / FGSC 987).